We begin with the raw amino-acid sequence, 272 residues long: Insulin-like growth factor-binding protein 1 (272 aa).

Residues 1–25 (MPEVPAAGLWPFLLLLAVQVSTVAS) form the signal peptide. Residues 28-109 (QPWHCAPCSA…TRGQGACVPE (82 aa)) form the IGFBP N-terminal domain. Cystine bridges form between Cys32–Cys59, Cys35–Cys61, Cys43–Cys62, Cys50–Cys65, and Cys73–Cys86. A phosphoserine mark is found at Ser139, Ser157, and Ser169. Residue Thr170 is modified to Phosphothreonine. Position 171 is a phosphotyrosine (Tyr171). In terms of domain architecture, Thyroglobulin type-1 spans 186–264 (KQPCRRELYK…SLEIRGDPNC (79 aa)). 3 cysteine pairs are disulfide-bonded: Cys189/Cys219, Cys230/Cys241, and Cys243/Cys264. Position 255 is a phosphoserine (Ser255). The Cell attachment site signature appears at 259–261 (RGD).

In terms of assembly, binds equally well IGF1 and IGF2. Interacts with integrin ITGA5:ITGB1. Interacts with VHL; this interaction inhibits HIF1A degradation.

The protein resides in the secreted. Multifunctional protein that plays a critical role in regulating the availability of IGFs such as IGF1 and IGF2 to their receptors and thereby regulates IGF-mediated cellular processes including cell migration, proliferation, differentiation or apoptosis in a cell-type specific manner. Also plays a positive role in cell migration by interacting with integrin ITGA5:ITGB1 through its RGD motif. Mechanistically, binding to integrins leads to activation of focal adhesion kinase/PTK2 and stimulation of the mitogen-activated protein kinase (MAPK) pathway. Regulates cardiomyocyte apoptosis by suppressing HIF-1alpha/HIF1A degradation through ubiquitination. This is Insulin-like growth factor-binding protein 1 (IGFBP1) from Ictidomys tridecemlineatus (Thirteen-lined ground squirrel).